The following is a 210-amino-acid chain: Ribosomal RNA small subunit methyltransferase G (210 aa).

Residues G77, F82, 100–102, 128–129, and R141 each bind S-adenosyl-L-methionine; these read ERS and VE.

The protein belongs to the methyltransferase superfamily. RNA methyltransferase RsmG family.

It is found in the cytoplasm. Functionally, specifically methylates the N7 position of a guanine in 16S rRNA. The protein is Ribosomal RNA small subunit methyltransferase G of Borrelia recurrentis (strain A1).